The sequence spans 330 residues: Methionyl-tRNA formyltransferase (330 aa).

Residue 112-115 (SLLP) participates in (6S)-5,6,7,8-tetrahydrofolate binding.

Belongs to the Fmt family.

The enzyme catalyses L-methionyl-tRNA(fMet) + (6R)-10-formyltetrahydrofolate = N-formyl-L-methionyl-tRNA(fMet) + (6S)-5,6,7,8-tetrahydrofolate + H(+). Its function is as follows. Attaches a formyl group to the free amino group of methionyl-tRNA(fMet). The formyl group appears to play a dual role in the initiator identity of N-formylmethionyl-tRNA by promoting its recognition by IF2 and preventing the misappropriation of this tRNA by the elongation apparatus. The protein is Methionyl-tRNA formyltransferase of Synechococcus sp. (strain RCC307).